The sequence spans 142 residues: Endoribonuclease YbeY (142 aa).

Zn(2+) is bound by residues H107, H111, and D117.

This sequence belongs to the endoribonuclease YbeY family. The cofactor is Zn(2+).

The protein localises to the cytoplasm. In terms of biological role, single strand-specific metallo-endoribonuclease involved in late-stage 70S ribosome quality control and in maturation of the 3' terminus of the 16S rRNA. In Chlorobium phaeobacteroides (strain DSM 266 / SMG 266 / 2430), this protein is Endoribonuclease YbeY.